Here is a 316-residue protein sequence, read N- to C-terminus: Acetylglutamate kinase (316 aa).

Substrate contacts are provided by residues 65 to 66 (GG), R87, and N179.

This sequence belongs to the acetylglutamate kinase family. ArgB subfamily.

Its subcellular location is the cytoplasm. It catalyses the reaction N-acetyl-L-glutamate + ATP = N-acetyl-L-glutamyl 5-phosphate + ADP. It functions in the pathway amino-acid biosynthesis; L-arginine biosynthesis; N(2)-acetyl-L-ornithine from L-glutamate: step 2/4. Catalyzes the ATP-dependent phosphorylation of N-acetyl-L-glutamate. This Alkaliphilus metalliredigens (strain QYMF) protein is Acetylglutamate kinase.